Here is a 366-residue protein sequence, read N- to C-terminus: Methyltransferase calH (366 aa).

S-adenosyl-L-methionine contacts are provided by residues threonine 189, aspartate 216, and 245 to 246 (NA).

This sequence belongs to the class I-like SAM-binding methyltransferase superfamily.

It participates in secondary metabolite biosynthesis. Its function is as follows. Methyltransferase; part of the gene cluster that mediates the biosynthesis of calbistrin A and related compounds. Calbistrin A is a secondary metabolite with an interesting structure that was recently found to have bioactivity against leukemia cells. It consists of two polyketides linked by an ester bond: a bicyclic decalin containing polyketide and a linear 12 carbon dioic acid structure. The polyketide synthase calA is probably responsible for forming the decalin moiety. Because calA lacks a designated enoylreductase (ER) domain, the required activity is provided by the trans-enoyl reductase calK. Following release from the PKS, calF then probably catalyzes the oxidation and the subsequent Diels Alder cycloisomerization that lead to the formation of the decalin moiety. The decalin polyketide backbone includes two C-methyl groups, at C7 and C11 in backbone, of which the C7 position is probably methylated by the methyltransferase domain of calA. A candidate for adding the methyl group at C11, if not done by CalA, is the cluster methyltransferase calH. Several additional tailoring enzymes within the cluster could be involved in the modification of the decalin polyketide product. Those include the 3 cytochrome P450 monooxygenases CalE, CalG and CalL, of which one might be responsible for the introduction of the extra hydroxyl group attached to the backbone of the decalin moiety, at position C9 in the backbone, that allows for attachment of the linear moiety. One tailoring enzyme activity that is expected to be involved in biosynthesis of calbistrin is an acyltransferase for connecting the two polyketide synthase products, and which could be performed by the cluster acyltransferase calJ. The enzyme responsible for the biosynthesis of the linear moiety, probably a second PKS, has not been identified yet. In Penicillium decumbens, this protein is Methyltransferase calH.